Here is a 268-residue protein sequence, read N- to C-terminus: Protein c-ets-1-B (268 aa).

Positions 131 to 139 (FKDYVRDRA) are helix HI-1. The segment at 150 to 157 (AAALAGYT) is helix HI-2. Residues 162–242 (IQLWQFLLEL…AGKRYVYRFV (81 aa)) constitute a DNA-binding region (ETS). Residues 245–249 (LQSLL) are helix H4. Residues 253–259 (PEELHAM) are helix H5.

It belongs to the ETS family. In terms of assembly, binds DNA as a homodimer; homodimerization is required for transcription activation.

The protein resides in the nucleus. The protein localises to the cytoplasm. Autoinhibited by a module composed of four alpha helices (HI-1, HI-2, H4, and H5) that flank the DNA-binding ETS domain, reducing the affinity for DNA. Functionally, transcription factor. Directly controls the expression of cytokine and chemokine genes in a wide variety of different cellular contexts. This is Protein c-ets-1-B (ets1-b) from Xenopus laevis (African clawed frog).